The following is a 504-amino-acid chain: L-carnitine/gamma-butyrobetaine antiporter (504 aa).

12 helical membrane passes run 10–30, 51–71, 92–112, 143–163, 195–215, 231–251, 263–283, 316–336, 347–367, 398–418, 446–466, and 475–495; these read MEPKVFFPPLIIVGILCWLTV, WGWAFEWYMVVMLFGWFWLVF, IFMMFASCTSAAVLFWGSIEI, GPLPWATYSFLSVAFAYFFFV, FYLVALIFAMGTSLGLATPLV, LDAIIITCWIILNAICVACGL, SYLSFLMLGWVFIVSGASFIM, WSVFYWAWWVIYAIQMSIFLA, LCFGMVLGLTASTWILWTVLG, WAALPLSTATMWGFFILCFIA, LLVRIGWSILVGIIGIVLLAL, and AIIAGGCPLFFVNIMVTLSFI.

Belongs to the BCCT transporter (TC 2.A.15) family. CaiT subfamily. As to quaternary structure, homotrimer.

The protein resides in the cell inner membrane. It carries out the reaction 4-(trimethylamino)butanoate(in) + (R)-carnitine(out) = 4-(trimethylamino)butanoate(out) + (R)-carnitine(in). Its pathway is amine and polyamine metabolism; carnitine metabolism. In terms of biological role, catalyzes the exchange of L-carnitine for gamma-butyrobetaine. In Shigella dysenteriae serotype 1 (strain Sd197), this protein is L-carnitine/gamma-butyrobetaine antiporter.